Reading from the N-terminus, the 529-residue chain is Low affinity inorganic phosphate transporter 4 (529 aa).

Over 1 to 21 (MASDNLVVLNALDTARTQWYH) the chain is Cytoplasmic. The chain crosses the membrane as a helical span at residues 22–42 (VTAVIIAGMGFFTDAYDLFCI). Topologically, residues 43–71 (STVSKLLGRLYYYDPSTKAPGKLPHMANN) are extracellular. The chain crosses the membrane as a helical span at residues 72-92 (WVIGVALVGTLSGQLVFGWLG). Residues 93 to 99 (DKLGRKK) are Cytoplasmic-facing. A helical transmembrane segment spans residues 100 to 120 (VYGLTLILMVICALCSGLSLG). The Extracellular segment spans residues 121-125 (YSPKS). Residues 126–146 (VIGTLCFFRFWLGFGIGGDYP) form a helical membrane-spanning segment. Over 147 to 161 (LSATIMSEYANKSTR) the chain is Cytoplasmic. A helical membrane pass occupies residues 162 to 182 (GAFIAAVFAMQGVGIIFAGLV). Residues 183-211 (SMTISKVFLMNFEGKPFNVDEVLSTEPEA) are Extracellular-facing. Residues 212–232 (DYVWRIVLMLGALPALLTYYW) form a helical membrane-spanning segment. Residues 233 to 291 (RMKMPETGRYTAIIEGNAKQAAIDMGKVLDIEIQAEGDKLAQFKAANEYSLLSNEFFQR) lie on the Cytoplasmic side of the membrane. A helical membrane pass occupies residues 292-312 (HGLHLIGTMSTWFLLDIAFYS). Over 313 to 344 (QNLTQKDIFPVMGLTSKANTISALREMFETSR) the chain is Extracellular. An N-linked (GlcNAc...) asparagine glycan is attached at Asn314. The chain crosses the membrane as a helical span at residues 345 to 365 (AMFVIALFGTFPGYWFTVFFI). The Cytoplasmic segment spans residues 366-374 (EKIGRFKIQ). Residues 375–395 (LVGFFMMSVFMAIIGVKYDYL) form a helical membrane-spanning segment. Residues 396–405 (RNKEHKWTFA) are Extracellular-facing. Residues 406 to 426 (ALYGLTFFFANFGPNSTTFVL) traverse the membrane as a helical segment. The Cytoplasmic segment spans residues 427 to 437 (PAELFPTRVRS). A helical transmembrane segment spans residues 438-458 (TCHALSAALGKAGAMISAFGI). Residues 459–471 (QQYTQDQDVRKIK) lie on the Extracellular side of the membrane. The helical transmembrane segment at 472–492 (TAMLLLAFTNMVGFCCTFLVT) threads the bilayer. At 493–529 (ETKGRSLEEISGEDGRQNETQMKTTRPVSGHPDDGWE) the chain is on the cytoplasmic side. Residues 501 to 529 (EISGEDGRQNETQMKTTRPVSGHPDDGWE) form a disordered region. Positions 510-519 (NETQMKTTRP) are enriched in polar residues.

This sequence belongs to the major facilitator superfamily. Phosphate:H(+) symporter (TC 2.A.1.9) family.

It is found in the cell membrane. It carries out the reaction phosphate(in) + H(+)(in) = phosphate(out) + H(+)(out). Its function is as follows. Low-affinity transporter for external inorganic phosphate (Pi) probably involved in the acquisition of phosphate released by arbuscular mycorrhizal (AM) fungi (e.g. Rhizophagus irregularis and Glomus intraradices) during AM symbiosis. Acts as a Pi-sensing machinery at the root tip level, independently of AM fungi, involved in the regulation of early root branching and lateral roots formation. The sequence is that of Low affinity inorganic phosphate transporter 4 from Petunia hybrida (Petunia).